Reading from the N-terminus, the 144-residue chain is Superoxide dismutase [Mn], mitochondrial (144 aa).

Residues histidine 10, histidine 58, and aspartate 143 each contribute to the Mn(2+) site.

The protein belongs to the iron/manganese superoxide dismutase family. In terms of assembly, homotetramer. The cofactor is Mn(2+).

It is found in the mitochondrion matrix. The catalysed reaction is 2 superoxide + 2 H(+) = H2O2 + O2. Its function is as follows. Destroys superoxide anion radicals which are normally produced within the cells and which are toxic to biological systems. The polypeptide is Superoxide dismutase [Mn], mitochondrial (Petromyzon marinus (Sea lamprey)).